A 124-amino-acid polypeptide reads, in one-letter code: MANVHQENEEMEQPLQNGQEDRPVGGGEGHQPAANNNNNNHNHNHNHHRRGQARRLAPNFRWAIPNRQMNDGLGGDGDDMEMFMEEMREIRRKLRELQLRNCLRILMGELSNHHDHHDEFCLMP.

The tract at residues 1 to 56 (MANVHQENEEMEQPLQNGQEDRPVGGGEGHQPAANNNNNNHNHNHNHHRRGQARRL) is disordered. Positions 42 to 53 (NHNHNHHRRGQA) are enriched in basic residues. The segment at 81 to 106 (EMFMEEMREIRRKLRELQLRNCLRIL) is interaction with p75NTR/NGFR. Residues 81-124 (EMFMEEMREIRRKLRELQLRNCLRILMGELSNHHDHHDEFCLMP) are interaction with 14-3-3 epsilon. The Nuclear export signal signature appears at 90 to 100 (IRRKLRELQLR). The segment at 113 to 117 (HHDHH) is his cluster. Residue cysteine 121 coordinates Zn(2+).

The protein belongs to the BEX family. Self-associates. Binds to the DEATH domain of p75NTR/NGFR. Interacts with 14-3-3 epsilon (YWHAE). Interacts with DIABLO/SMAC. In terms of processing, ubiquitinated. Degraded by the proteasome. In terms of tissue distribution, widely expressed.

The protein localises to the nucleus. Its subcellular location is the cytoplasm. The protein resides in the cytosol. In terms of biological role, may be a signaling adapter molecule involved in NGFR/p75NTR-mediated apoptosis induced by NGF. Plays a role in zinc-triggered neuronal death. In absence of reductive stress, acts as a pseudosubstrate for the CRL2(FEM1B) complex: associates with FEM1B via zinc, thereby preventing association between FEM1B and its substrates. The chain is Protein BEX3 from Mus musculus (Mouse).